The sequence spans 236 residues: Small ribosomal subunit protein eS6 (236 aa).

S232 and S233 each carry phosphoserine.

It belongs to the eukaryotic ribosomal protein eS6 family. Phosphorylated.

In Eremothecium gossypii (strain ATCC 10895 / CBS 109.51 / FGSC 9923 / NRRL Y-1056) (Yeast), this protein is Small ribosomal subunit protein eS6 (RPS6).